The chain runs to 508 residues: Alpha-amylase (508 aa).

An N-terminal signal peptide occupies residues 1–19 (MLSLIIAACCVTVALAGTF). Cysteines 46 and 102 form a disulfide. Asn-116, Arg-173, and Asp-182 together coordinate Ca(2+). Cys-156 and Cys-175 form a disulfide bridge. Arg-210 contacts chloride. The Nucleophile role is filled by Asp-212. His-216 serves as a coordination point for Ca(2+). The active-site Proton donor is the Glu-248. The chloride site is built by Asn-311 and Arg-349. Disulfide bonds link Cys-383-Cys-389 and Cys-455-Cys-467.

It belongs to the glycosyl hydrolase 13 family. Monomer. Ca(2+) serves as cofactor. It depends on chloride as a cofactor.

It carries out the reaction Endohydrolysis of (1-&gt;4)-alpha-D-glucosidic linkages in polysaccharides containing three or more (1-&gt;4)-alpha-linked D-glucose units.. This Pecten maximus (King scallop) protein is Alpha-amylase.